Consider the following 339-residue polypeptide: N-acetylornithine carbamoyltransferase (339 aa).

Carbamoyl phosphate is bound by residues 49–52 (SMRT), Trp-77, and Arg-112. Glu-144 lines the N(2)-acetyl-L-ornithine pocket. A carbamoyl phosphate-binding site is contributed by 148 to 151 (HPCQ). N(2)-acetyl-L-ornithine is bound by residues Lys-252 and Leu-295. 294-295 (CL) contributes to the carbamoyl phosphate binding site. N6-carboxylysine is present on Lys-302. Carbamoyl phosphate is bound at residue Arg-322.

The protein belongs to the aspartate/ornithine carbamoyltransferase superfamily. AOTCase family. In terms of assembly, homotrimer.

It localises to the cytoplasm. The catalysed reaction is N(2)-acetyl-L-ornithine + carbamoyl phosphate = N(2)-acetyl-L-citrulline + phosphate + H(+). Its pathway is amino-acid biosynthesis; L-arginine biosynthesis. With respect to regulation, carboxylation at Lys-302 increases the catalytic activity of the enzyme. Is potently inhibited by N(alpha)-acetyl-N(delta)-phosphonoacetyl-L-ornithine (PALAO). Functionally, catalyzes the transfer of the carbamoyl group from carbamoyl phosphate to the delta-amino group of N(2)-acetyl-L-ornithine to produce N(2)-acetyl-L-citrulline. This is a step in an alternative arginine biosynthesis pathway. The enzyme has no activity with ornithine. The polypeptide is N-acetylornithine carbamoyltransferase (Xanthomonas campestris pv. campestris (strain ATCC 33913 / DSM 3586 / NCPPB 528 / LMG 568 / P 25)).